We begin with the raw amino-acid sequence, 171 residues long: Transcription factor pcr1 (171 aa).

The bZIP domain maps to 10 to 73 (DEKRRRILER…FRLKSQLLAH (64 aa)). The basic motif stretch occupies residues 12 to 51 (KRRRILERNRIAASKFRQKKKEWIKELEQTANAAFEQSKR). The leucine-zipper stretch occupies residues 52–66 (LQLLLSQLQQEAFRL). The tract at residues 125–171 (QMHPSLQGLPPNQHPQMPPSSQQPNSDDVQQHMFSAAGLPRSLGGPI) is disordered. Low complexity predominate over residues 143-152 (PSSQQPNSDD).

It belongs to the bZIP family. In terms of assembly, heterodimer of pcr1/mts2 and atf1/mts1.

It localises to the nucleus. In terms of biological role, involved in regulation of gene expression for sexual development. Binds and activates CRE sites (cAMP-response elements, also known as M26 meiotic recombination hotspots). This chain is Transcription factor pcr1 (pcr1), found in Schizosaccharomyces pombe (strain 972 / ATCC 24843) (Fission yeast).